Here is a 1028-residue protein sequence, read N- to C-terminus: Unconventional myosin-Ic-A (1028 aa).

The residue at position 1 (Met-1) is an N-acetylmethionine. Positions 12 to 696 (GVQDFVLLEN…TLFATEDALE (685 aa)) constitute a Myosin motor domain. 105–112 (GESGSGKT) is an ATP binding site. At Lys-348 the chain carries N6-methyllysine. Residues 573-595 (LSKLMEILMSKEPSYVRCIKPND) form an actin-binding region. IQ domains follow at residues 699 to 728 (KQGI…SAIN) and 722 to 751 (MKHS…AVDV). Positions 850 to 1024 (KDNYPQSVPR…NGHLSVVAPR (175 aa)) constitute a TH1 domain.

Belongs to the TRAFAC class myosin-kinesin ATPase superfamily. Myosin family. Interacts (via its IQ motifs) with calmodulin.

The protein resides in the cytoplasm. The protein localises to the cell membrane. It is found in the cell projection. It localises to the stereocilium membrane. Myosins are actin-based motor molecules with ATPase activity. Unconventional myosins serve in intracellular movements. Their highly divergent tails are presumed to bind to membranous compartments, which would be moved relative to actin filaments. Involved in egg activation by coupling dynamic actin to membrane. The sequence is that of Unconventional myosin-Ic-A (myo1c-a) from Xenopus laevis (African clawed frog).